The sequence spans 322 residues: Acetyl-coenzyme A carboxylase carboxyl transferase subunit alpha (322 aa).

The 264-residue stretch at 30–293 folds into the CoA carboxyltransferase C-terminal domain; that stretch reads AVDISAEILR…KKALQDSLKL (264 aa).

It belongs to the AccA family. As to quaternary structure, acetyl-CoA carboxylase is a heterohexamer composed of biotin carboxyl carrier protein (AccB), biotin carboxylase (AccC) and two subunits each of ACCase subunit alpha (AccA) and ACCase subunit beta (AccD).

Its subcellular location is the cytoplasm. The enzyme catalyses N(6)-carboxybiotinyl-L-lysyl-[protein] + acetyl-CoA = N(6)-biotinyl-L-lysyl-[protein] + malonyl-CoA. Its pathway is lipid metabolism; malonyl-CoA biosynthesis; malonyl-CoA from acetyl-CoA: step 1/1. Component of the acetyl coenzyme A carboxylase (ACC) complex. First, biotin carboxylase catalyzes the carboxylation of biotin on its carrier protein (BCCP) and then the CO(2) group is transferred by the carboxyltransferase to acetyl-CoA to form malonyl-CoA. The sequence is that of Acetyl-coenzyme A carboxylase carboxyl transferase subunit alpha from Nitrosospira multiformis (strain ATCC 25196 / NCIMB 11849 / C 71).